A 273-amino-acid chain; its full sequence is uncharacterized protein (273 aa).

A helical membrane pass occupies residues 7–27 (LTLGICLVLLIILIVGYVIMT).

The protein belongs to the staphylococcal tandem lipoprotein family.

The protein resides in the cell membrane. This is an uncharacterized protein from Staphylococcus aureus (strain MSSA476).